The primary structure comprises 311 residues: Ribosomal protein L11 methyltransferase (311 aa).

Residues T160, G181, D203, and N246 each contribute to the S-adenosyl-L-methionine site.

The protein belongs to the methyltransferase superfamily. PrmA family.

It is found in the cytoplasm. It carries out the reaction L-lysyl-[protein] + 3 S-adenosyl-L-methionine = N(6),N(6),N(6)-trimethyl-L-lysyl-[protein] + 3 S-adenosyl-L-homocysteine + 3 H(+). Functionally, methylates ribosomal protein L11. The polypeptide is Ribosomal protein L11 methyltransferase (Macrococcus caseolyticus (strain JCSC5402) (Macrococcoides caseolyticum)).